The sequence spans 75 residues: Large ribosomal subunit protein uL30 (75 aa).

It belongs to the universal ribosomal protein uL30 family. Part of the 50S ribosomal subunit.

In Roseiflexus castenholzii (strain DSM 13941 / HLO8), this protein is Large ribosomal subunit protein uL30.